Reading from the N-terminus, the 398-residue chain is Subtilisin-like protease CPC735_050320 (398 aa).

Residues 1-19 (MVFLGKILPLALAALSVNG) form the signal peptide. Positions 20-117 (AEILSAPGAE…IERDQIMKAS (98 aa)) are excised as a propeptide. Residues 35–115 (YIVVMKEGTS…AYIERDQIMK (81 aa)) form the Inhibitor I9 domain. The Peptidase S8 domain maps to 127–398 (SWGLARVSSR…NRLINNGVSQ (272 aa)). Catalysis depends on charge relay system residues D159 and H190. N-linked (GlcNAc...) asparagine glycosylation is found at N220 and N250. S344 acts as the Charge relay system in catalysis.

It belongs to the peptidase S8 family.

The protein resides in the secreted. Its function is as follows. Secreted subtilisin-like serine protease with keratinolytic activity that contributes to pathogenicity. The polypeptide is Subtilisin-like protease CPC735_050320 (Coccidioides posadasii (strain C735) (Valley fever fungus)).